The chain runs to 273 residues: HMP-PP phosphatase (273 aa).

Aspartate 8 acts as the Nucleophile in catalysis. Mg(2+) contacts are provided by aspartate 8, aspartate 10, and aspartate 212.

This sequence belongs to the HAD-like hydrolase superfamily. Cof family. Mg(2+) is required as a cofactor.

It catalyses the reaction 4-amino-2-methyl-5-(diphosphooxymethyl)pyrimidine + H2O = 4-amino-2-methyl-5-(phosphooxymethyl)pyrimidine + phosphate + H(+). Its function is as follows. Catalyzes the hydrolysis of 4-amino-2-methyl-5-hydroxymethylpyrimidine pyrophosphate (HMP-PP) to 4-amino-2-methyl-5-hydroxymethylpyrimidine phosphate (HMP-P). The protein is HMP-PP phosphatase of Yersinia pseudotuberculosis serotype I (strain IP32953).